The chain runs to 435 residues: Nuclear distribution protein nudF 2 (435 aa).

The 33-residue stretch at 9–41 folds into the LisH domain; the sequence is QAEELHKSIIAYLSANGLPETTAILRKELGVTE. 8 WD repeats span residues 86 to 125, 128 to 171, 175 to 214, 217 to 256, 280 to 320, 322 to 361, 366 to 396, and 397 to 434; these read SHRD…LEVT, GHTR…KNIR, GHDH…CVKT, GHTG…ENKL, APLA…LMTL, GHDN…KCVK, THGG…VRQI, and PDVA…QIFA.

Belongs to the WD repeat LIS1/nudF family. In terms of assembly, self-associates. Interacts with nudE and dynein.

The protein localises to the cytoplasm. The protein resides in the cytoskeleton. It localises to the spindle pole. In terms of biological role, positively regulates the activity of the minus-end directed microtubule motor protein dynein. May enhance dynein-mediated microtubule sliding by targeting dynein to the microtubule plus end. Required for nuclear migration during vegetative growth as well as development. Required for retrograde early endosome (EE) transport from the hyphal tip. Required for localization of dynein to the mitotic spindle poles. Recruits additional proteins to the dynein complex at SPBs. The polypeptide is Nuclear distribution protein nudF 2 (Aspergillus clavatus (strain ATCC 1007 / CBS 513.65 / DSM 816 / NCTC 3887 / NRRL 1 / QM 1276 / 107)).